Here is a 283-residue protein sequence, read N- to C-terminus: Arsenite methyltransferase (283 aa).

It belongs to the methyltransferase superfamily. Arsenite methyltransferase family.

It catalyses the reaction arsenic triglutathione + [thioredoxin]-dithiol + S-adenosyl-L-methionine + 2 H2O = methylarsonous acid + [thioredoxin]-disulfide + 3 glutathione + S-adenosyl-L-homocysteine + H(+). The enzyme catalyses arsenic triglutathione + 2 [thioredoxin]-dithiol + 2 S-adenosyl-L-methionine + H2O = dimethylarsinous acid + 2 [thioredoxin]-disulfide + 3 glutathione + 2 S-adenosyl-L-homocysteine + 2 H(+). It carries out the reaction arsenic triglutathione + 3 [thioredoxin]-dithiol + 3 S-adenosyl-L-methionine = trimethylarsine + 3 [thioredoxin]-disulfide + 3 glutathione + 3 S-adenosyl-L-homocysteine + 3 H(+). In terms of biological role, catalyzes the transfer of a methyl group from AdoMet to arsenite, producing methylated arsenicals. Involved in the conversion of As(III) to a number of di- and trimethylated species, with trimethylarsine as the end product. Reduces the arsenic toxicity in the cell and may contribute to the global arsenic cycling. The polypeptide is Arsenite methyltransferase (Rhodopseudomonas palustris (strain ATCC BAA-98 / CGA009)).